Consider the following 363-residue polypeptide: Protein CPn_1058/CP_0792/CPj1058/CpB1100 (363 aa).

An N-terminal signal peptide occupies residues 1-27; the sequence is MKLYQTLRGIVLVSTGCIFLGMHGGYA.

This sequence belongs to the chlamydial CPn_1058/CT_355/TC_0634 family.

In Chlamydia pneumoniae (Chlamydophila pneumoniae), this protein is Protein CPn_1058/CP_0792/CPj1058/CpB1100.